The sequence spans 198 residues: 3-isopropylmalate dehydratase small subunit (198 aa).

Belongs to the LeuD family. LeuD type 1 subfamily. Heterodimer of LeuC and LeuD.

It carries out the reaction (2R,3S)-3-isopropylmalate = (2S)-2-isopropylmalate. Its pathway is amino-acid biosynthesis; L-leucine biosynthesis; L-leucine from 3-methyl-2-oxobutanoate: step 2/4. Catalyzes the isomerization between 2-isopropylmalate and 3-isopropylmalate, via the formation of 2-isopropylmaleate. The protein is 3-isopropylmalate dehydratase small subunit of Mycobacterium avium (strain 104).